The sequence spans 353 residues: MSKNKLSKGQQRRVKANHQRRLKTTAEKADYDDNLFGETSEGIVISRFGMHADVESADGSVHRCNIRRTIRSLVTGDRVVWRPGKDAADGVSVKGIVEAVHDRASVLTRPDFYDGVKPIAANIDQIVVVSAILPELSLNIIDRYLVACEAQDIEPLIVLNKIDLLDDDGLRFVNEQMDIYRNIGYRVLLVSSRTQDGLKPLEAALTDRISIFAGQSGVGKSSLLNALLGLSEDQILTNDVSDVSGLGQHTTTAARLYHFPHGGDVIDSPGVREFGLWHLEAEQITNGFVEFHDYLGRCKYRDCKHDTDPGCALREAVENGKIAESRFENYHRILESMAQVQVKTRKNFSSSDD.

The disordered stretch occupies residues 1-24 (MSKNKLSKGQQRRVKANHQRRLKT). Basic residues predominate over residues 10 to 23 (QQRRVKANHQRRLK). The 171-residue stretch at 104–274 (ASVLTRPDFY…VIDSPGVREF (171 aa)) folds into the CP-type G domain. GTP contacts are provided by residues 160-163 (NKID) and 214-222 (GQSGVGKSS). Zn(2+) contacts are provided by cysteine 298, cysteine 303, histidine 305, and cysteine 311.

This sequence belongs to the TRAFAC class YlqF/YawG GTPase family. RsgA subfamily. As to quaternary structure, monomer. Associates with 30S ribosomal subunit, binds 16S rRNA. Zn(2+) serves as cofactor.

The protein resides in the cytoplasm. Its function is as follows. One of several proteins that assist in the late maturation steps of the functional core of the 30S ribosomal subunit. Helps release RbfA from mature subunits. May play a role in the assembly of ribosomal proteins into the subunit. Circularly permuted GTPase that catalyzes slow GTP hydrolysis, GTPase activity is stimulated by the 30S ribosomal subunit. The sequence is that of Small ribosomal subunit biogenesis GTPase RsgA from Klebsiella pneumoniae subsp. pneumoniae (strain ATCC 700721 / MGH 78578).